Consider the following 427-residue polypeptide: MTDTNLDFLAQTDPTLAAMIQGELQRQREHLELIASENFTSPAVLAAQGSVLTNKYAEGLPKKRYYGGCEWVDQAEQLAIDRAKELFGAAHANVQPHSGAQANFAVFLALLNPGDTIMGMDLSHGGHLTHGSPVNVSGKWFKVSHYGVSPDTERLDYDSILELAKKEKPKLLICGYSAYPRIIEFDKFRAIADEVGAYLMADIAHIAGLVASGHHPNPLPYCDVVTTTTHKTLRGPRGGLIMTNNPELGKQFDKAVFPGTQGGPLEQVIAAKAVAFGEALKPEFKVYSGQVIANAQALANQLNQRGFKLVSGGTDNHLMLVDLRCIDMTGKEADKLVSEINITANKNTVPFDPESPFVTSGLRLGSPAMTTRGLGVEEFREIGNIIADCLLNRNDEAVKKDCLNRVKALCDRFPLYPHLNIPVPVLA.

(6S)-5,6,7,8-tetrahydrofolate is bound by residues Leu-122 and Gly-126–Leu-128. Lys-231 carries the N6-(pyridoxal phosphate)lysine modification. (6S)-5,6,7,8-tetrahydrofolate contacts are provided by residues Glu-247 and Ser-355 to Phe-357.

It belongs to the SHMT family. In terms of assembly, homodimer. The cofactor is pyridoxal 5'-phosphate.

It localises to the cytoplasm. It carries out the reaction (6R)-5,10-methylene-5,6,7,8-tetrahydrofolate + glycine + H2O = (6S)-5,6,7,8-tetrahydrofolate + L-serine. Its pathway is one-carbon metabolism; tetrahydrofolate interconversion. It functions in the pathway amino-acid biosynthesis; glycine biosynthesis; glycine from L-serine: step 1/1. Functionally, catalyzes the reversible interconversion of serine and glycine with tetrahydrofolate (THF) serving as the one-carbon carrier. This reaction serves as the major source of one-carbon groups required for the biosynthesis of purines, thymidylate, methionine, and other important biomolecules. Also exhibits THF-independent aldolase activity toward beta-hydroxyamino acids, producing glycine and aldehydes, via a retro-aldol mechanism. This Crocosphaera subtropica (strain ATCC 51142 / BH68) (Cyanothece sp. (strain ATCC 51142)) protein is Serine hydroxymethyltransferase.